Here is a 255-residue protein sequence, read N- to C-terminus: tRNA (guanine-N(1)-)-methyltransferase (255 aa).

S-adenosyl-L-methionine is bound by residues Gly117 and 137–142; that span reads LGDFVL.

Belongs to the RNA methyltransferase TrmD family. In terms of assembly, homodimer.

The protein localises to the cytoplasm. It catalyses the reaction guanosine(37) in tRNA + S-adenosyl-L-methionine = N(1)-methylguanosine(37) in tRNA + S-adenosyl-L-homocysteine + H(+). Functionally, specifically methylates guanosine-37 in various tRNAs. In Paraburkholderia phymatum (strain DSM 17167 / CIP 108236 / LMG 21445 / STM815) (Burkholderia phymatum), this protein is tRNA (guanine-N(1)-)-methyltransferase.